A 166-amino-acid chain; its full sequence is Probable chemoreceptor glutamine deamidase CheD 1 (166 aa).

This sequence belongs to the CheD family.

It catalyses the reaction L-glutaminyl-[protein] + H2O = L-glutamyl-[protein] + NH4(+). Functionally, probably deamidates glutamine residues to glutamate on methyl-accepting chemotaxis receptors (MCPs), playing an important role in chemotaxis. This chain is Probable chemoreceptor glutamine deamidase CheD 1, found in Leptospira interrogans serogroup Icterohaemorrhagiae serovar copenhageni (strain Fiocruz L1-130).